The sequence spans 758 residues: Microtubule-associated protein tau (758 aa).

Residues 1-26 (MAEPRQEFEVMEDHAGTYGLGDRKDQ) are compositionally biased toward basic and acidic residues. A disordered region spans residues 1-573 (MAEPRQEFEV…PVPMPDLKNV (573 aa)). Ala2 bears the N-acetylalanine mark. The residue at position 18 (Tyr18) is a Phosphotyrosine; by FYN. Tyr29 carries the phosphotyrosine modification. A Glycyl lysine isopeptide (Lys-Gly) (interchain with G-Cter in ubiquitin) cross-link involves residue Lys44. A phosphoserine mark is found at Ser46 and Ser61. The segment covering 61 to 71 (SETSDAKSTPT) has biased composition (polar residues). 2 positions are modified to phosphothreonine: Thr69 and Thr71. N-linked (Glc) (glycation) lysine; in PHF-tau; in vitro glycosylation is present at Lys87. Thr111 is subject to Phosphothreonine. Composition is skewed to basic and acidic residues over residues 179-189 (EGGRHAPELLK) and 207-216 (GGKERPGSKE). Position 214 is a phosphoserine; by SGK1 (Ser214). The span at 217–228 (EVDEDRDVDESS) shows a compositional bias: acidic residues. Positions 314–323 (EQAHSEEHLG) are enriched in basic and acidic residues. Low complexity predominate over residues 324–340 (RAAFPGAPGEGPEARGP). Composition is skewed to basic and acidic residues over residues 344–356 (EDTKEADLPEPSE) and 381–393 (KSKDGTGSDDKKA). Lys383 carries an N-linked (Glc) (glycation) lysine; in PHF-tau; in vitro glycan. The span at 442–453 (VSSVTSRTGSSG) shows a compositional bias: low complexity. Residues 455–466 (KEMKLKGADGKT) are compositionally biased toward basic and acidic residues. N-linked (Glc) (glycation) lysine; in PHF-tau; in vitro glycosylation is present at Lys467. Thr470 carries the phosphothreonine; by PDPK1 modification. Residue Arg472 is modified to Omega-N-methylarginine. Lys480 carries an N-linked (Glc) (glycation) lysine; in PHF-tau; in vitro glycan. Position 480 is an N6,N6-dimethyllysine; alternate (Lys480). The residue at position 480 (Lys480) is an N6-acetyllysine; alternate. Asn484 carries the post-translational modification Deamidated asparagine; in tau and PHF-tau; partial. Residue Thr486 is modified to Phosphothreonine. An N-linked (Glc) (glycation) lysine; in PHF-tau; in vitro glycan is attached at Lys491. Residues 491 to 503 (KTPPAPKTPPSSG) show a composition bias toward pro residues. Residue Thr492 is modified to Phosphothreonine. A Phosphothreonine; by PDPK1 modification is found at Thr498. Phosphoserine occurs at positions 502, 508, and 512. The segment covering 504-531 (EPPKSGDRSGYSSPGSPGTPGSRSRTPS) has biased composition (low complexity). Tyr514 bears the Phosphotyrosine; by TTBK1 mark. Phosphoserine; by PDPK1 and TTBK1 is present on residues Ser515 and Ser516. Ser519 is modified (phosphoserine; by CK1, PDPK1 and TTBK1). The residue at position 522 (Thr522) is a Phosphothreonine; by CK1 and PDPK1. O-linked (GlcNAc) serine glycosylation occurs at Ser525. Position 529 is a phosphothreonine; by BRSK1, BRSK2, DYRK2 and PDPK1 (Thr529). Ser531 carries the phosphoserine; by PKA modification. The residue at position 534 (Thr534) is a Phosphothreonine; by PDPK1. Lys542 carries an N-linked (Glc) (glycation) lysine; in PHF-tau; in vitro glycan. Lys542 is subject to N6-acetyllysine. Phosphothreonine; by GSK3-beta and PDPK1 is present on Thr548. An N-linked (Glc) (glycation) lysine; in PHF-tau; in vitro glycan is attached at Lys551. Residue Ser552 is modified to Phosphoserine; by PDPK1. At Ser554 the chain carries Phosphoserine; by PHK. A glycan (O-linked (GlcNAc) serine) is linked at Ser555. Tau/MAP repeat units follow at residues 561–591 (QTAPVPMPDLKNVKSKIGSTENLKHQPGGGK), 592–622 (VQIINKKLDLSNVQSKCGSKDNIKHVPGGGS), 623–653 (VQIVYKPVDLSKVTSKCGSLGNIHHKPGGGQ), and 654–685 (VEVKSEKLDFKDRVQSKIGSLDNITHVPGGGN). A microtubule-binding domain region spans residues 561–685 (QTAPVPMPDL…NITHVPGGGN (125 aa)). Residue Lys571 forms a Glycyl lysine isopeptide (Lys-Gly) (interchain with G-Cter in ubiquitin); in PHF-tau linkage. Residue Lys576 is glycosylated (N-linked (Glc) (glycation) lysine; in PHF-tau; in vitro). An N6-acetyllysine; alternate modification is found at Lys576. Position 576 is an N6-methyllysine; alternate (Lys576). A Glycyl lysine isopeptide (Lys-Gly) (interchain with G-Cter in ubiquitin); alternate cross-link involves residue Lys576. Ser579 carries the phosphoserine; by MARK1, MARK2, MARK3, MARK4, BRSK1, BRSK2 and PHK modification. Lys584 is covalently cross-linked (Glycyl lysine isopeptide (Lys-Gly) (interchain with G-Cter in ubiquitin)). At Asn596 the chain carries Deamidated asparagine; in tau and PHF-tau; partial. 2 N-linked (Glc) (glycation) lysine; in PHF-tau; in vitro glycosylation sites follow: Lys597 and Lys598. An N6-acetyllysine; alternate modification is found at Lys598. A Glycyl lysine isopeptide (Lys-Gly) (interchain with G-Cter in ubiquitin); alternate cross-link involves residue Lys598. Phosphoserine; by PHK is present on Ser602. An N6-acetyllysine modification is found at Lys607. Residues Cys608 and Cys639 are joined by a disulfide bond. Ser610 bears the Phosphoserine mark. Lys615 is subject to N6-acetyllysine; alternate. Lys615 participates in a covalent cross-link: Glycyl lysine isopeptide (Lys-Gly) (interchain with G-Cter in ubiquitin); alternate. A Phosphoserine; by PHK modification is found at Ser622. Lys628 carries the post-translational modification N6,N6-dimethyllysine; alternate. Residues Lys628, Lys634, and Lys638 each carry the N6-acetyllysine; alternate modification. Lys628 participates in a covalent cross-link: Glycyl lysine isopeptide (Lys-Gly) (interchain with G-Cter in ubiquitin); in PHF-tau. Residues Lys634 and Lys638 each participate in a glycyl lysine isopeptide (Lys-Gly) (interchain with G-Cter in ubiquitin); alternate cross-link. Ser641 carries the phosphoserine modification. Residues Lys648, Lys660, and Lys664 each carry the N6-acetyllysine; alternate modification. Glycyl lysine isopeptide (Lys-Gly) (interchain with G-Cter in ubiquitin); alternate cross-links involve residues Lys648, Lys660, and Lys664. Residue Lys664 is glycosylated (N-linked (Glc) (glycation) lysine; in PHF-tau; in vitro). Arg666 bears the Omega-N-methylarginine mark. Ser669 is modified (phosphoserine; by PHK). An N-linked (Glc) (glycation) lysine; in PHF-tau; in vitro glycan is attached at Lys670. Lys670 is covalently cross-linked (Glycyl lysine isopeptide (Lys-Gly) (interchain with G-Cter in ubiquitin); in PHF-tau). The residue at position 673 (Ser673) is a Phosphoserine. Residue Lys686 is glycosylated (N-linked (Glc) (glycation) lysine; in PHF-tau; in vitro). N6-acetyllysine; alternate is present on Lys686. Lys686 is covalently cross-linked (Glycyl lysine isopeptide (Lys-Gly) (interchain with G-Cter in ubiquitin); alternate). Residue Lys692 forms a Glycyl lysine isopeptide (Lys-Gly) (interchain with G-Cter in ubiquitin) linkage. Lys702 is modified (N6-acetyllysine; alternate). Residue Lys702 forms a Glycyl lysine isopeptide (Lys-Gly) (interchain with G-Cter in ubiquitin); alternate linkage. The residue at position 711 (Tyr711) is a Phosphotyrosine. Ser713 carries the post-translational modification Phosphoserine; by CK1 and PDPK1. Positions 715-734 (VVSGDTSPRHLSNVSSTGSI) are disordered. The residue at position 717 (Ser717) is a Phosphoserine; alternate. O-linked (GlcNAc) serine; alternate glycosylation occurs at Ser717. A compositionally biased stretch (polar residues) spans 718–733 (GDTSPRHLSNVSSTGS). Thr720 carries the phosphothreonine modification. The residue at position 721 (Ser721) is a Phosphoserine; by CK1 and PDPK1. Ser726 is subject to Phosphoserine. Ser733 is subject to Phosphoserine; by CaMK2 and TTBK1. Position 739 is a phosphoserine; by PDPK1 and TTBK1 (Ser739). Thr744 is modified (phosphothreonine; by TTBK1).

As to quaternary structure, interacts with MARK1, MARK2, MARK3 and MARK4. Interacts with PSMC2 through SQSTM1. Interacts with SQSTM1 when polyubiquitinated. Interacts with FKBP4. Binds to CSNK1D. Interacts with SGK1. Interacts with EPM2A; the interaction dephosphorylates MAPT at Ser-396. Interacts with PIN1. Interacts with LRRK2. Interacts with LRP1, leading to endocytosis; this interaction is reduced in the presence of LRPAP1/RAP. Phosphorylation at serine and threonine residues in S-P or T-P motifs by proline-directed protein kinases (PDPK1, CDK1, CDK5, GSK3, MAPK) (only 2-3 sites per protein in interphase, seven-fold increase in mitosis, and in the form associated with paired helical filaments (PHF-tau)), and at serine residues in K-X-G-S motifs by MAP/microtubule affinity-regulating kinase (MARK1, MARK2, MARK3 or MARK4), causing detachment from microtubules, and their disassembly. Phosphorylation decreases with age. Phosphorylation within tau/MAP's repeat domain or in flanking regions seems to reduce tau/MAP's interaction with, respectively, microtubules or plasma membrane components. Phosphorylation on Ser-610, Ser-622, Ser-641 and Ser-673 in several isoforms during mitosis. Phosphorylation at Ser-548 by GSK3B reduces ability to bind and stabilize microtubules. Phosphorylation at Ser-579 by BRSK1 and BRSK2 in neurons affects ability to bind microtubules and plays a role in neuron polarization. Phosphorylated at Ser-554, Ser-579, Ser-602, Ser-606 and Ser-669 by PHK. Phosphorylation at Ser-214 by SGK1 mediates microtubule depolymerization and neurite formation in hippocampal neurons. There is a reciprocal down-regulation of phosphorylation and O-GlcNAcylation. Phosphorylation on Ser-717 completely abolishes the O-GlcNAcylation on this site, while phosphorylation on Ser-713 and Ser-721 reduces glycosylation by a factor of 2 and 4 respectively. Phosphorylation on Ser-721 is reduced by about 41.5% by GlcNAcylation on Ser-717. Dephosphorylated at several serine and threonine residues by the serine/threonine phosphatase PPP5C. In terms of processing, polyubiquitinated. Requires functional TRAF6 and may provoke SQSTM1-dependent degradation by the proteasome. PHF-tau can be modified by three different forms of polyubiquitination. 'Lys-48'-linked polyubiquitination is the major form, 'Lys-6'-linked and 'Lys-11'-linked polyubiquitination also occur. Post-translationally, O-glycosylated. O-GlcNAcylation content is around 8.2%. There is reciprocal down-regulation of phosphorylation and O-GlcNAcylation. Phosphorylation on Ser-717 completely abolishes the O-GlcNAcylation on this site, while phosphorylation on Ser-713 and Ser-721 reduces O-GlcNAcylation by a factor of 2 and 4 respectively. O-GlcNAcylation on Ser-717 decreases the phosphorylation on Ser-721 by about 41.5%. Glycation of PHF-tau, but not normal brain TAU/MAPT. Glycation is a non-enzymatic post-translational modification that involves a covalent linkage between a sugar and an amino group of a protein molecule forming ketoamine. Subsequent oxidation, fragmentation and/or cross-linking of ketoamine leads to the production of advanced glycation endproducts (AGES). Glycation may play a role in stabilizing PHF aggregation leading to tangle formation in AD. As to expression, expressed in neurons. Isoform PNS-tau is expressed in the peripheral nervous system while the others are expressed in the central nervous system.

The protein localises to the cytoplasm. Its subcellular location is the cytosol. It localises to the cell membrane. It is found in the cytoskeleton. The protein resides in the cell projection. The protein localises to the axon. Its subcellular location is the dendrite. It localises to the secreted. Promotes microtubule assembly and stability, and might be involved in the establishment and maintenance of neuronal polarity. The C-terminus binds axonal microtubules while the N-terminus binds neural plasma membrane components, suggesting that tau functions as a linker protein between both. Axonal polarity is predetermined by TAU/MAPT localization (in the neuronal cell) in the domain of the cell body defined by the centrosome. The short isoforms allow plasticity of the cytoskeleton whereas the longer isoforms may preferentially play a role in its stabilization. The protein is Microtubule-associated protein tau of Homo sapiens (Human).